The chain runs to 202 residues: Holliday junction branch migration complex subunit RuvA (202 aa).

The segment at 1-63 (MIAFLSGRVV…EDSLTLFGFA (63 aa)) is domain I. The tract at residues 64-142 (DDDERDTFER…EPGGDTAATP (79 aa)) is domain II. Residues 143–152 (EQSAAAAPRN) form a flexible linker region. Residues 152 to 202 (NWRAQVVSGLVNLGWSTREAEAAADAVAAEAGEQPDVAALLRSALRRLSRA) are domain III.

Belongs to the RuvA family. Homotetramer. Forms an RuvA(8)-RuvB(12)-Holliday junction (HJ) complex. HJ DNA is sandwiched between 2 RuvA tetramers; dsDNA enters through RuvA and exits via RuvB. An RuvB hexamer assembles on each DNA strand where it exits the tetramer. Each RuvB hexamer is contacted by two RuvA subunits (via domain III) on 2 adjacent RuvB subunits; this complex drives branch migration. In the full resolvosome a probable DNA-RuvA(4)-RuvB(12)-RuvC(2) complex forms which resolves the HJ.

It localises to the cytoplasm. In terms of biological role, the RuvA-RuvB-RuvC complex processes Holliday junction (HJ) DNA during genetic recombination and DNA repair, while the RuvA-RuvB complex plays an important role in the rescue of blocked DNA replication forks via replication fork reversal (RFR). RuvA specifically binds to HJ cruciform DNA, conferring on it an open structure. The RuvB hexamer acts as an ATP-dependent pump, pulling dsDNA into and through the RuvAB complex. HJ branch migration allows RuvC to scan DNA until it finds its consensus sequence, where it cleaves and resolves the cruciform DNA. The protein is Holliday junction branch migration complex subunit RuvA of Thermobifida fusca (strain YX).